Consider the following 449-residue polypeptide: UDP-N-acetylmuramoylalanine--D-glutamate ligase (449 aa).

118-124 (GSNGKTT) serves as a coordination point for ATP.

Belongs to the MurCDEF family.

It is found in the cytoplasm. The enzyme catalyses UDP-N-acetyl-alpha-D-muramoyl-L-alanine + D-glutamate + ATP = UDP-N-acetyl-alpha-D-muramoyl-L-alanyl-D-glutamate + ADP + phosphate + H(+). It participates in cell wall biogenesis; peptidoglycan biosynthesis. In terms of biological role, cell wall formation. Catalyzes the addition of glutamate to the nucleotide precursor UDP-N-acetylmuramoyl-L-alanine (UMA). This is UDP-N-acetylmuramoylalanine--D-glutamate ligase from Leuconostoc mesenteroides subsp. mesenteroides (strain ATCC 8293 / DSM 20343 / BCRC 11652 / CCM 1803 / JCM 6124 / NCDO 523 / NBRC 100496 / NCIMB 8023 / NCTC 12954 / NRRL B-1118 / 37Y).